We begin with the raw amino-acid sequence, 974 residues long: RING finger protein nhl-1 (974 aa).

The interval 1 to 29 (MSSSPQNEAEAREKMRELMSRPPSSRPAD) is disordered. A compositionally biased stretch (basic and acidic residues) spans 9–19 (AEAREKMRELM). An RING-type zinc finger spans residues 43–84 (CPICLDRYKQPKLLPCQHTFCYPCLESCADTLHRNLKCPECR). Disordered stretches follow at residues 360-395 (VKSDERASMRDREADRTSSRHSHRNPEPDESSIRYR) and 416-548 (SLLT…DFPV). Polar residues predominate over residues 416-431 (SLLTTSVTADSSSRTS). Positions 437–446 (RVTRSVEPTK) are enriched in basic and acidic residues. Residues 447 to 465 (SRPTSLIVPNTETPRTVSP) are compositionally biased toward polar residues. Residues 488–501 (APLPQLPIRKPPLP) show a composition bias toward pro residues. The segment covering 511–528 (LNEKVETIRRAHQQRQDA) has biased composition (basic and acidic residues). The segment covering 529 to 538 (SRAASRAVSS) has biased composition (low complexity). NHL repeat units follow at residues 699 to 742 (RAVF…FDKD), 746 to 788 (VRQF…FGLE), 792 to 835 (LFSF…FDKN), 839 to 883 (IAKF…FDPH), 887 to 930 (LFSF…FDAQ), and 934 to 974 (VSSF…IQIF).

As to quaternary structure, interacts with ubc-13.

The chain is RING finger protein nhl-1 from Caenorhabditis elegans.